A 399-amino-acid polypeptide reads, in one-letter code: Phosphoglycerate kinase (399 aa).

Substrate-binding positions include Asp-22–Asn-24, Arg-38, His-61–Arg-64, Arg-120, and Arg-153. Residues Lys-204, Glu-326, and Gly-352 to Thr-355 contribute to the ATP site.

Belongs to the phosphoglycerate kinase family. Monomer.

It localises to the cytoplasm. It carries out the reaction (2R)-3-phosphoglycerate + ATP = (2R)-3-phospho-glyceroyl phosphate + ADP. The protein operates within carbohydrate degradation; glycolysis; pyruvate from D-glyceraldehyde 3-phosphate: step 2/5. In Geobacter sp. (strain M21), this protein is Phosphoglycerate kinase.